Consider the following 1121-residue polypeptide: Potassium channel subfamily U member 1 (1121 aa).

Residues 1–24 are Extracellular-facing; the sequence is MSQTLLDSLNQKELTETSCTIEIQ. Residues 25 to 45 form a helical membrane-spanning segment; that stretch reads AAFILSSLATFFGGLIILFLF. Residues 46–101 are Cytoplasmic-facing; the sequence is RIALKSSRSWKYVKGPRGLLELFSSRRIEANPLRKLYFHGVFRQRIEMLLSAQTVV. A helical transmembrane segment spans residues 102-122; sequence GQVLVILVFVLSIGSLVIYFI. The Extracellular portion of the chain corresponds to 123–137; that stretch reads NSMDPVRRCSSYEDK. A helical transmembrane segment spans residues 138-158; the sequence is IVHVDLSFNAFFSFYFGLRFW. Over 159–165 the chain is Cytoplasmic; it reads AAEDKIK. Residues 166–186 traverse the membrane as a helical segment; the sequence is FWLEMNSIVDIFTIPPTFISY. Over 187–188 the chain is Extracellular; it reads YL. Residues 189–209 traverse the membrane as a helical; Voltage-sensor segment; that stretch reads KSNWLGLRFLRALRLLELPKI. Residues 210 to 226 lie on the Cytoplasmic side of the membrane; it reads LQILQVIKTSNSVKLSK. Residues 227–247 form a helical membrane-spanning segment; the sequence is LLSIVISTWFTAAGFLHLVEN. Topologically, residues 248–259 are extracellular; sequence SGDPWLNGRNSQ. Residues 260–282 constitute an intramembrane region (pore-forming); the sequence is TMSYFESIYLVTATMSTVGFGDV. The short motif at 276–279 is the Selectivity for potassium element; that stretch reads TVGF. At 283–290 the chain is on the extracellular side; it reads VAKTSLGR. Residues 291-311 form a helical membrane-spanning segment; the sequence is IFIVFFTLGSLILFANYIPEM. The Cytoplasmic segment spans residues 312-1121; it reads VELFSTRKKY…LDASDIVQEK (810 aa). RCK N-terminal domains are found at residues 331–473 and 718–889; these read KKFI…DNIL and QNHI…DGML. Disordered regions lie at residues 836–858 and 1052–1076; these read SPTP…KERK and DSSP…GSNF.

This sequence belongs to the potassium channel family. Calcium-activated (TC 1.A.1.3) subfamily. KCa5.1/KCNU1 sub-subfamily. As to quaternary structure, homotetramer; which constitutes the calcium-activated potassium channel. Interact with LRRC52; this interaction changes some channel gating properties, such as shifting gating to more negative potentials at a given pH. In terms of tissue distribution, testis-specific. Mainly expressed in spermatocytes. As to expression, expressed in testis, brain, eye and kidney.

It is found in the cell membrane. It localises to the cytoplasm. It carries out the reaction K(+)(in) = K(+)(out). Regulated by changes in cytosolic pH; activated by alkalization. In contrast to human KCNU1 is not activated by Ca(2+) or Mg(2+). The auxiliary subunit LRRC52 shifts the activation of KCNU1 to more negative potentials at a given pH. In terms of biological role, testis-specific potassium channel activated by both intracellular pH and membrane voltage that mediates export of K(+). Represents the primary spermatozoan K(+) current. The channel underlies a pH-triggered membrane hyperpolarization during the process of sperm capacitation, as sperm encounter the alkaline environment near the ovum in the female reproductive tract, thereby playing an essential for male fertility. This is Potassium channel subfamily U member 1 (Kcnu1) from Mus musculus (Mouse).